Reading from the N-terminus, the 874-residue chain is Alanine--tRNA ligase (874 aa).

Zn(2+)-binding residues include His-562, His-566, Cys-665, and His-669.

This sequence belongs to the class-II aminoacyl-tRNA synthetase family. It depends on Zn(2+) as a cofactor.

The protein resides in the cytoplasm. The enzyme catalyses tRNA(Ala) + L-alanine + ATP = L-alanyl-tRNA(Ala) + AMP + diphosphate. Its function is as follows. Catalyzes the attachment of alanine to tRNA(Ala) in a two-step reaction: alanine is first activated by ATP to form Ala-AMP and then transferred to the acceptor end of tRNA(Ala). Also edits incorrectly charged Ser-tRNA(Ala) and Gly-tRNA(Ala) via its editing domain. The sequence is that of Alanine--tRNA ligase from Pseudomonas putida (strain GB-1).